The chain runs to 201 residues: Acireductone dioxygenase 2 (201 aa).

Residues histidine 83, histidine 85, glutamate 89, and histidine 129 each contribute to the Fe(2+) site. Histidine 83, histidine 85, glutamate 89, and histidine 129 together coordinate Ni(2+).

The protein belongs to the acireductone dioxygenase (ARD) family. Fe(2+) is required as a cofactor. Requires Ni(2+) as cofactor.

The protein resides in the cytoplasm. It localises to the nucleus. It catalyses the reaction 1,2-dihydroxy-5-(methylsulfanyl)pent-1-en-3-one + O2 = 4-methylsulfanyl-2-oxobutanoate + formate + 2 H(+). The catalysed reaction is 1,2-dihydroxy-5-(methylsulfanyl)pent-1-en-3-one + O2 = 3-(methylsulfanyl)propanoate + CO + formate + 2 H(+). The protein operates within amino-acid biosynthesis; L-methionine biosynthesis via salvage pathway; L-methionine from S-methyl-5-thio-alpha-D-ribose 1-phosphate: step 5/6. In terms of biological role, catalyzes 2 different reactions between oxygen and the acireductone 1,2-dihydroxy-3-keto-5-methylthiopentene (DHK-MTPene) depending upon the metal bound in the active site. Fe-containing acireductone dioxygenase (Fe-ARD) produces formate and 2-keto-4-methylthiobutyrate (KMTB), the alpha-ketoacid precursor of methionine in the methionine recycle pathway. Ni-containing acireductone dioxygenase (Ni-ARD) produces methylthiopropionate, carbon monoxide and formate, and does not lie on the methionine recycle pathway. The sequence is that of Acireductone dioxygenase 2 from Coprinopsis cinerea (strain Okayama-7 / 130 / ATCC MYA-4618 / FGSC 9003) (Inky cap fungus).